Reading from the N-terminus, the 336-residue chain is Holliday junction branch migration complex subunit RuvB (336 aa).

The tract at residues 2 to 186 (QDQEEERMIT…FGVICKLELY (185 aa)) is large ATPase domain (RuvB-L). Residues L25, R26, G67, K70, T71, T72, 133 to 135 (EDF), R176, Y186, and R223 contribute to the ATP site. T71 lines the Mg(2+) pocket. The interval 187–257 (NNKQLTAIVK…VAEEALILLE (71 aa)) is small ATPAse domain (RuvB-S). A head domain (RuvB-H) region spans residues 260 to 336 (SLGLDNTDKK…YEHFNIPSAE (77 aa)). DNA-binding residues include R296, R315, and R320.

It belongs to the RuvB family. Homohexamer. Forms an RuvA(8)-RuvB(12)-Holliday junction (HJ) complex. HJ DNA is sandwiched between 2 RuvA tetramers; dsDNA enters through RuvA and exits via RuvB. An RuvB hexamer assembles on each DNA strand where it exits the tetramer. Each RuvB hexamer is contacted by two RuvA subunits (via domain III) on 2 adjacent RuvB subunits; this complex drives branch migration. In the full resolvosome a probable DNA-RuvA(4)-RuvB(12)-RuvC(2) complex forms which resolves the HJ.

Its subcellular location is the cytoplasm. It carries out the reaction ATP + H2O = ADP + phosphate + H(+). The RuvA-RuvB-RuvC complex processes Holliday junction (HJ) DNA during genetic recombination and DNA repair, while the RuvA-RuvB complex plays an important role in the rescue of blocked DNA replication forks via replication fork reversal (RFR). RuvA specifically binds to HJ cruciform DNA, conferring on it an open structure. The RuvB hexamer acts as an ATP-dependent pump, pulling dsDNA into and through the RuvAB complex. RuvB forms 2 homohexamers on either side of HJ DNA bound by 1 or 2 RuvA tetramers; 4 subunits per hexamer contact DNA at a time. Coordinated motions by a converter formed by DNA-disengaged RuvB subunits stimulates ATP hydrolysis and nucleotide exchange. Immobilization of the converter enables RuvB to convert the ATP-contained energy into a lever motion, pulling 2 nucleotides of DNA out of the RuvA tetramer per ATP hydrolyzed, thus driving DNA branch migration. The RuvB motors rotate together with the DNA substrate, which together with the progressing nucleotide cycle form the mechanistic basis for DNA recombination by continuous HJ branch migration. Branch migration allows RuvC to scan DNA until it finds its consensus sequence, where it cleaves and resolves cruciform DNA. In Alkaliphilus metalliredigens (strain QYMF), this protein is Holliday junction branch migration complex subunit RuvB.